We begin with the raw amino-acid sequence, 329 residues long: NAC domain-containing protein 79 (329 aa).

The NAC domain maps to 17 to 167; sequence LPPGFRFHPT…EWVICRVFHK (151 aa). The DNA-binding element occupies 114–173; sequence VGMKKTLVFYRGRAPKGQKTNWVMHEYRLDGKLSAHNLPKTAKNEWVICRVFHKTAGGKK.

As to expression, expressed at low levels in leaves.

Its subcellular location is the nucleus. The sequence is that of NAC domain-containing protein 79 from Arabidopsis thaliana (Mouse-ear cress).